The chain runs to 394 residues: Elongation factor Tu (394 aa).

One can recognise a tr-type G domain in the interval 10-205 (KPHMNVGTIG…SMDNYFDLPE (196 aa)). Positions 19–26 (GHVDHGKT) are G1. Residue 19 to 26 (GHVDHGKT) participates in GTP binding. Thr26 is a Mg(2+) binding site. The segment at 61 to 65 (GITIN) is G2. The tract at residues 82–85 (DCPG) is G3. Residues 82-86 (DCPGH) and 137-140 (NKLD) contribute to the GTP site. The interval 137 to 140 (NKLD) is G4. The tract at residues 173–175 (SAF) is G5.

This sequence belongs to the TRAFAC class translation factor GTPase superfamily. Classic translation factor GTPase family. EF-Tu/EF-1A subfamily. In terms of assembly, monomer.

The protein localises to the cytoplasm. It catalyses the reaction GTP + H2O = GDP + phosphate + H(+). Its function is as follows. GTP hydrolase that promotes the GTP-dependent binding of aminoacyl-tRNA to the A-site of ribosomes during protein biosynthesis. This is Elongation factor Tu from Borreliella burgdorferi (strain ATCC 35210 / DSM 4680 / CIP 102532 / B31) (Borrelia burgdorferi).